We begin with the raw amino-acid sequence, 363 residues long: Phosphoserine aminotransferase (363 aa).

Positions 9 and 42 each coordinate L-glutamate. Pyridoxal 5'-phosphate is bound by residues 76 to 77, tryptophan 102, threonine 154, aspartate 174, and glutamine 197; that span reads AR. Position 198 is an N6-(pyridoxal phosphate)lysine (lysine 198). Residue 240–241 participates in pyridoxal 5'-phosphate binding; it reads NT.

Belongs to the class-V pyridoxal-phosphate-dependent aminotransferase family. SerC subfamily. As to quaternary structure, homodimer. Pyridoxal 5'-phosphate is required as a cofactor.

It is found in the cytoplasm. The catalysed reaction is O-phospho-L-serine + 2-oxoglutarate = 3-phosphooxypyruvate + L-glutamate. The enzyme catalyses 4-(phosphooxy)-L-threonine + 2-oxoglutarate = (R)-3-hydroxy-2-oxo-4-phosphooxybutanoate + L-glutamate. Its pathway is amino-acid biosynthesis; L-serine biosynthesis; L-serine from 3-phospho-D-glycerate: step 2/3. The protein operates within cofactor biosynthesis; pyridoxine 5'-phosphate biosynthesis; pyridoxine 5'-phosphate from D-erythrose 4-phosphate: step 3/5. In terms of biological role, catalyzes the reversible conversion of 3-phosphohydroxypyruvate to phosphoserine and of 3-hydroxy-2-oxo-4-phosphonooxybutanoate to phosphohydroxythreonine. This is Phosphoserine aminotransferase from Baumannia cicadellinicola subsp. Homalodisca coagulata.